Reading from the N-terminus, the 1196-residue chain is Sorbin and SH3 domain-containing protein 2 (1196 aa).

Disordered stretches follow at residues 25–57 and 75–95; these read VQSS…ETLN and PNLQ…GNSG. 3 positions are modified to phosphoserine: Ser27, Ser28, and Ser40. A compositionally biased stretch (polar residues) spans 83–92; that stretch reads PTQSHITING. Phosphoserine is present on residues Ser130 and Ser143. Position 148 is an alanine amide (Met148). The SoHo domain occupies 166–227; sequence VIKAPHYPGI…YNTPYTYNAG (62 aa). A compositionally biased stretch (polar residues) spans 235–247; that stretch reads AQSHPAAKTQTYR. 2 disordered regions span residues 235–314 and 329–407; these read AQSH…EPGK and SSID…GDDS. Basic and acidic residues-rich tracts occupy residues 252–262 and 276–312; these read SHSDNGTDAFK and RPRD…EYEP. Ser254 is modified (phosphoserine). A compositionally biased stretch (polar residues) spans 329–343; it reads SSIDRSLERPSSSAS. Phosphoserine is present on residues Ser334, Ser340, Ser343, and Ser354. The residue at position 372 (Thr372) is a Phosphothreonine. A Phosphoserine modification is found at Ser382. The span at 382–399 shows a compositional bias: low complexity; it reads SSSTFTTSFISSSPSSPS. Thr387 carries the phosphothreonine modification. 13 positions are modified to phosphoserine: Ser392, Ser393, Ser394, Ser396, Ser397, Ser399, Ser478, Ser589, Ser592, Ser645, Ser648, Ser844, and Ser938. Residues 929-958 are disordered; the sequence is QDHESPRSYSSTLTDLGRSVSRERRGTPEK. Basic and acidic residues predominate over residues 948–958; sequence VSRERRGTPEK. 2 consecutive SH3 domains span residues 959–1018 and 1034–1095; these read EVKL…KLTP and GEIG…VVKR. Phosphoserine occurs at positions 1113 and 1119. One can recognise an SH3 3 domain in the interval 1137–1196; that stretch reads GGGEPFQALYNYTPRNEDELELRESDVVDVMEKCDDGWFVGTSRRTKFFGTFPGNYVKRL.

As to quaternary structure, interacts with ABL1/c-Abl, ABL2/v-Abl/Arg, ACTN, CBL and PALLD. Interacts with ABL, CBL, DNM1, DNM2, FLOT1, AFDN, PTK2B/PYK2, SAPAP, SPTAN1, SYNJ1, SYNJ2, VCL/vinculin and WASF. Interacts with PTPN12 and WASF1 via its SH3 domains; this interaction may mediate the partial PTPN12 and WASF1 translocation to focal adhesion sites. Ubiquitinated by CBL. Expressed in brain; found in synapses in cerebellum.

The protein localises to the cytoplasm. It localises to the perinuclear region. Its subcellular location is the apical cell membrane. It is found in the cell junction. The protein resides in the focal adhesion. The protein localises to the cell projection. It localises to the lamellipodium. In terms of biological role, adapter protein that plays a role in the assembling of signaling complexes, being a link between ABL kinases and actin cytoskeleton. Can form complex with ABL1 and CBL, thus promoting ubiquitination and degradation of ABL1. May play a role in the regulation of pancreatic cell adhesion, possibly by acting on WASF1 phosphorylation, enhancing phosphorylation by ABL1, as well as dephosphorylation by PTPN12. Isoform 2 increases water and sodium absorption in the intestine and gall-bladder. The sequence is that of Sorbin and SH3 domain-containing protein 2 (Sorbs2) from Rattus norvegicus (Rat).